We begin with the raw amino-acid sequence, 91 residues long: Sec-independent protein translocase protein TatA (91 aa).

A helical transmembrane segment spans residues 1–21; that stretch reads MGIFDWKHWIVILIVVVLVFG. Residues 42–91 are disordered; sequence AMHDDDKPAEQPAPQPQQAQPAPQGSPLNQPHTIDAQAHKVDEPIRKDQV. A compositionally biased stretch (low complexity) spans 51-64; the sequence is EQPAPQPQQAQPAP. Residues 78–91 show a composition bias toward basic and acidic residues; that stretch reads QAHKVDEPIRKDQV.

This sequence belongs to the TatA/E family. As to quaternary structure, the Tat system comprises two distinct complexes: a TatABC complex, containing multiple copies of TatA, TatB and TatC subunits, and a separate TatA complex, containing only TatA subunits. Substrates initially bind to the TatABC complex, which probably triggers association of the separate TatA complex to form the active translocon.

It localises to the cell inner membrane. Part of the twin-arginine translocation (Tat) system that transports large folded proteins containing a characteristic twin-arginine motif in their signal peptide across membranes. TatA could form the protein-conducting channel of the Tat system. The protein is Sec-independent protein translocase protein TatA of Pseudomonas syringae pv. tomato (strain ATCC BAA-871 / DC3000).